The following is a 141-amino-acid chain: Hemoglobin subunit alpha-A (141 aa).

Residues valine 1 to arginine 141 enclose the Globin domain. O2 is bound at residue histidine 58. Histidine 87 is a heme b binding site.

The protein belongs to the globin family. As to quaternary structure, heterotetramer of two alpha chains and two beta chains. In terms of tissue distribution, red blood cells.

Functionally, involved in oxygen transport from the lung to the various peripheral tissues. This chain is Hemoglobin subunit alpha-A (HBAA), found in Caretta caretta (Loggerhead sea turtle).